The primary structure comprises 97 residues: MQKSEGFRSKTRYKLQKHPRQKGMAPLTRALKCYTEGDRVHVVLDPSVQKGMPHPKFHGKTGVIVAQRGRSFLVRVKDGGKYKDIIARPQHLRESKL.

The disordered stretch occupies residues 1 to 26 (MQKSEGFRSKTRYKLQKHPRQKGMAP). Basic residues predominate over residues 9–21 (SKTRYKLQKHPRQ).

Belongs to the eukaryotic ribosomal protein eL21 family.

This is Large ribosomal subunit protein eL21 from Methanococcus maripaludis (strain C5 / ATCC BAA-1333).